Consider the following 257-residue polypeptide: Imidazole glycerol phosphate synthase subunit HisF (257 aa).

Active-site residues include D11 and D130.

This sequence belongs to the HisA/HisF family. In terms of assembly, heterodimer of HisH and HisF.

The protein localises to the cytoplasm. It catalyses the reaction 5-[(5-phospho-1-deoxy-D-ribulos-1-ylimino)methylamino]-1-(5-phospho-beta-D-ribosyl)imidazole-4-carboxamide + L-glutamine = D-erythro-1-(imidazol-4-yl)glycerol 3-phosphate + 5-amino-1-(5-phospho-beta-D-ribosyl)imidazole-4-carboxamide + L-glutamate + H(+). It functions in the pathway amino-acid biosynthesis; L-histidine biosynthesis; L-histidine from 5-phospho-alpha-D-ribose 1-diphosphate: step 5/9. IGPS catalyzes the conversion of PRFAR and glutamine to IGP, AICAR and glutamate. The HisF subunit catalyzes the cyclization activity that produces IGP and AICAR from PRFAR using the ammonia provided by the HisH subunit. The polypeptide is Imidazole glycerol phosphate synthase subunit HisF (Vibrio cholerae serotype O1 (strain ATCC 39541 / Classical Ogawa 395 / O395)).